We begin with the raw amino-acid sequence, 193 residues long: Hypoxanthine/guanine phosphoribosyltransferase (193 aa).

The protein belongs to the purine/pyrimidine phosphoribosyltransferase family. Archaeal HPRT subfamily. As to quaternary structure, homodimer.

The protein resides in the cytoplasm. It carries out the reaction IMP + diphosphate = hypoxanthine + 5-phospho-alpha-D-ribose 1-diphosphate. It catalyses the reaction GMP + diphosphate = guanine + 5-phospho-alpha-D-ribose 1-diphosphate. Its pathway is purine metabolism; IMP biosynthesis via salvage pathway; IMP from hypoxanthine: step 1/1. In terms of biological role, catalyzes a salvage reaction resulting in the formation of IMP that is energically less costly than de novo synthesis. This is Hypoxanthine/guanine phosphoribosyltransferase from Methanothermobacter thermautotrophicus (strain ATCC 29096 / DSM 1053 / JCM 10044 / NBRC 100330 / Delta H) (Methanobacterium thermoautotrophicum).